The sequence spans 305 residues: Phosphoribosylaminoimidazole-succinocarboxamide synthase (305 aa).

This sequence belongs to the SAICAR synthetase family.

It catalyses the reaction 5-amino-1-(5-phospho-D-ribosyl)imidazole-4-carboxylate + L-aspartate + ATP = (2S)-2-[5-amino-1-(5-phospho-beta-D-ribosyl)imidazole-4-carboxamido]succinate + ADP + phosphate + 2 H(+). Its pathway is purine metabolism; IMP biosynthesis via de novo pathway; 5-amino-1-(5-phospho-D-ribosyl)imidazole-4-carboxamide from 5-amino-1-(5-phospho-D-ribosyl)imidazole-4-carboxylate: step 1/2. The sequence is that of Phosphoribosylaminoimidazole-succinocarboxamide synthase from Tropheryma whipplei (strain TW08/27) (Whipple's bacillus).